Here is a 96-residue protein sequence, read N- to C-terminus: Guanine nucleotide-binding protein alpha-9 subunit (96 aa).

The region spanning Tyr-2–Val-96 is the G-alpha domain. Positions Ile-9–Asp-16 are G1 motif. GTP contacts are provided by residues Asn-13 to Asp-16 and Ala-69. A G2 motif region spans residues Thr-67–Thr-72.

The protein belongs to the G-alpha family. In terms of assembly, g proteins are composed of 3 units; alpha, beta and gamma. The alpha chain contains the guanine nucleotide binding site. As to expression, expressed in ASJ neurons.

In terms of biological role, guanine nucleotide-binding proteins (G proteins) are involved as modulators or transducers in various transmembrane signaling systems. Plays a role in innate immunity and maintaining survival in response to metabolites of E.coli. This might be by regulating the expression and signaling of genes such as lys-8, ins-7 and daf-28. Has a role in lifespan to promote longevity. This chain is Guanine nucleotide-binding protein alpha-9 subunit, found in Caenorhabditis elegans.